A 318-amino-acid polypeptide reads, in one-letter code: E3 ubiquitin-protein ligase NRDP1 (318 aa).

The RING-type; degenerate zinc-finger motif lies at 18–57 (CPICSGVLEEPVRAPHCEHAFCNACITQWFAQQQICPVDR). An SIAH-type; degenerate zinc finger spans residues 78 to 138 (KLQISCDNAG…MPNHNCIKHL (61 aa)).

It carries out the reaction S-ubiquitinyl-[E2 ubiquitin-conjugating enzyme]-L-cysteine + [acceptor protein]-L-lysine = [E2 ubiquitin-conjugating enzyme]-L-cysteine + N(6)-ubiquitinyl-[acceptor protein]-L-lysine.. It participates in protein modification; protein ubiquitination. In terms of biological role, acts as E3 ubiquitin-protein ligase and regulates the degradation of target proteins. This is E3 ubiquitin-protein ligase NRDP1 (rnf41) from Danio rerio (Zebrafish).